Consider the following 1049-residue polypeptide: Ataxin-2-like protein (1049 aa).

Met-1 is subject to N-acetylmethionine. The disordered stretch occupies residues 1–54; the sequence is MLKPQPPQQTSQPQQPPPTQQAVARRSPGGTSPPNGGLPGPLTATAAPPGPPAA. Ser-27 carries the phosphoserine modification. Thr-45 bears the Phosphothreonine mark. The segment at 96-119 is interaction with MPL; it reads SVRGQTTGKGPPQSPVFEGVYNNS. Ser-109 bears the Phosphoserine mark. Tyr-116 carries the phosphotyrosine modification. The region spanning 120 to 197 is the Sm domain; that stretch reads RMLHFLTAVV…VLLVHFRNVD (78 aa). N6-acetyllysine is present on Lys-205. Ser-236 is subject to Phosphoserine. At Tyr-262 the chain carries Phosphotyrosine. Ser-304 carries the post-translational modification Phosphoserine. Tyr-307 carries the phosphotyrosine modification. A compositionally biased stretch (basic and acidic residues) spans 314 to 326; that stretch reads ENDDGRTEEEKHS. 7 disordered regions span residues 314 to 522, 554 to 573, 578 to 704, 736 to 772, 824 to 852, 868 to 944, and 999 to 1049; these read ENDD…RNLE, QFKL…FPSR, EAKG…LTAG, VSNS…PMMQ, SNPR…AEQP, HATQ…SSFP, and PQGH…PPGN. Positions 328–340 are enriched in polar residues; the sequence is VQRQGSGRESPSL. Phosphoserine is present on residues Ser-333 and Ser-337. Lys-346 is covalently cross-linked (Glycyl lysine isopeptide (Lys-Gly) (interchain with G-Cter in SUMO2)). The residue at position 347 (Tyr-347) is a Phosphotyrosine. Residue Arg-359 is modified to Asymmetric dimethylarginine. Residues 361 to 378 are compositionally biased toward low complexity; that stretch reads GVRCSSSRGGRPGLSSLP. Ser-389, Ser-407, and Ser-453 each carry phosphoserine. A compositionally biased stretch (low complexity) spans 454-466; sequence PKSAAPAPVSASC. A compositionally biased stretch (polar residues) spans 475–487; the sequence is VASSASIPVTSSV. A phosphoserine mark is found at Ser-496 and Ser-499. A compositionally biased stretch (basic and acidic residues) spans 508-519; it reads DVKELPTKEPSR. Phosphoserine is present on residues Ser-560, Ser-561, and Ser-562. Over residues 578-587 the composition is skewed to basic and acidic residues; it reads EAKGKEKEVD. Residue Ser-597 is modified to Phosphoserine. Thr-635 carries the phosphothreonine modification. Residues Ser-637, Ser-677, Ser-683, and Ser-687 each carry the phosphoserine modification. Over residues 681–697 the composition is skewed to low complexity; that stretch reads STSTPTSPGPRTHSTPS. 2 stretches are compositionally biased toward polar residues: residues 824–845 and 878–902; these read SNPR…STPQ and QPAT…QHQA. The span at 935–944 shows a compositional bias: low complexity; that stretch reads SAQSPQSSFP. Over residues 1033–1042 the composition is skewed to polar residues; sequence QVQSHPSQQL.

The protein belongs to the ataxin-2 family. Interacts with MPL/TPOR and EPOR and dissociates after ligand stimulation. Interacts with DDX6, G3BP, and ATXN2. Interacts with PRMT1. Interacts with CIC and ATXN1. Post-translationally, thrombopoietin triggers the phosphorylation on tyrosine residues in a way that is dependent on MPL C-terminal domain. Asymmetrically dimethylated. Probably methylated by PRMT1. Expressed in cerebellum.

The protein localises to the membrane. The protein resides in the cytoplasm. Its subcellular location is the nucleus speckle. It is found in the cytoplasmic granule. In terms of biological role, involved in the regulation of stress granule and P-body formation. This Mus musculus (Mouse) protein is Ataxin-2-like protein (Atxn2l).